A 518-amino-acid chain; its full sequence is GMP synthase [glutamine-hydrolyzing] (518 aa).

Positions 13-203 (KIIVLDFGSQ…ALNICGCKGD (191 aa)) constitute a Glutamine amidotransferase type-1 domain. C90 functions as the Nucleophile in the catalytic mechanism. Catalysis depends on residues H177 and E179. A GMPS ATP-PPase domain is found at 204 to 393 (WTMENFSEVE…LGMPDAIVWR (190 aa)). ATP is bound at residue 231 to 237 (SGGVDSS).

Homodimer.

It carries out the reaction XMP + L-glutamine + ATP + H2O = GMP + L-glutamate + AMP + diphosphate + 2 H(+). The protein operates within purine metabolism; GMP biosynthesis; GMP from XMP (L-Gln route): step 1/1. In terms of biological role, catalyzes the synthesis of GMP from XMP. This Listeria innocua serovar 6a (strain ATCC BAA-680 / CLIP 11262) protein is GMP synthase [glutamine-hydrolyzing].